We begin with the raw amino-acid sequence, 508 residues long: Protein ultraspiracle (508 aa).

The segment at 1–103 is modulating; that stretch reads MDNCDQDASF…NHPLSGSKHL (103 aa). Disordered stretches follow at residues 21 to 40 and 55 to 92; these read PDISQLNDSNNSSFSPKAES and PGSNSASSNNNSAGDAQMAQAPNSAGGSAAAAVQQQYP. The segment covering 24–35 has biased composition (polar residues); sequence SQLNDSNNSSFS. Position 35 is a phosphoserine (Ser-35). The segment covering 57–90 has biased composition (low complexity); that stretch reads SNSASSNNNSAGDAQMAQAPNSAGGSAAAAVQQQ. NR C4-type zinc fingers lie at residues 104-124 and 140-164; these read CSICGDRASGKHYGVYSCEGC and CRENRNCIIDKRQRNRCQYCRYQKC. The segment at residues 104–169 is a DNA-binding region (nuclear receptor); sequence CSICGDRASG…RYQKCLTCGM (66 aa). Residues 170–223 are hinge; the sequence is KREAVQEERQRGARNAAGRLSASGGGSSGPGSVGGSSSQGGGGGGGVSGGMGSG. The segment at 178–228 is disordered; it reads RQRGARNAAGRLSASGGGSSGPGSVGGSSSQGGGGGGGVSGGMGSGNGSDD. Residues 192–224 show a composition bias toward gly residues; it reads SGGGSSGPGSVGGSSSQGGGGGGGVSGGMGSGN. Residues 239 to 498 form the NR LBD domain; the sequence is SIERIIEAEQ…ELFLEQLEAP (260 aa).

This sequence belongs to the nuclear hormone receptor family. NR2 subfamily. Heterodimer of USP and ECR. Only the heterodimer is capable of high-affinity binding to ecdysone.

Its subcellular location is the nucleus. In terms of biological role, receptor for ecdysone. May be an important modulator of insect metamorphosis. Plays an important part in embryonic and post-embryonic development. Binds to ecdysone response elements (ECRES) such as in the promoter region of s15 chorion gene. This Drosophila melanogaster (Fruit fly) protein is Protein ultraspiracle (usp).